The chain runs to 61 residues: Mu-diguetoxin-Dc1c (61 aa).

3 disulfides stabilise this stretch: C12–C25, C19–C39, and C24–C53.

The protein belongs to the neurotoxin 26 (DTX) family. In terms of tissue distribution, expressed by the venom gland.

The protein localises to the secreted. In terms of biological role, acts by delaying the inactivation of presynaptic voltage-sensitive sodium channels (Nav). Acts against insects and causes a progressive spastic paralysis. In Diguetia canities (Desert bush spider), this protein is Mu-diguetoxin-Dc1c.